The chain runs to 323 residues: Acetyl-coenzyme A carboxylase carboxyl transferase subunit alpha (323 aa).

Positions 39–293 constitute a CoA carboxyltransferase C-terminal domain; the sequence is RLSKKSQQLT…RRALADSLRQ (255 aa).

It belongs to the AccA family. Acetyl-CoA carboxylase is a heterohexamer composed of biotin carboxyl carrier protein (AccB), biotin carboxylase (AccC) and two subunits each of ACCase subunit alpha (AccA) and ACCase subunit beta (AccD).

Its subcellular location is the cytoplasm. The enzyme catalyses N(6)-carboxybiotinyl-L-lysyl-[protein] + acetyl-CoA = N(6)-biotinyl-L-lysyl-[protein] + malonyl-CoA. The protein operates within lipid metabolism; malonyl-CoA biosynthesis; malonyl-CoA from acetyl-CoA: step 1/1. Its function is as follows. Component of the acetyl coenzyme A carboxylase (ACC) complex. First, biotin carboxylase catalyzes the carboxylation of biotin on its carrier protein (BCCP) and then the CO(2) group is transferred by the carboxyltransferase to acetyl-CoA to form malonyl-CoA. This Burkholderia multivorans (strain ATCC 17616 / 249) protein is Acetyl-coenzyme A carboxylase carboxyl transferase subunit alpha.